Consider the following 543-residue polypeptide: MDFSDDDMIDNKSGEENYSYGGGNESDDYNDVVDTIIPSEKSYVILKEEDILKLQRDDIERVSSILSLSQVEVIVLLLHYNWCVSKVEDEWFTDEERIRKAVGLLKEPVVDFNGGEKDKKCRKVNIQCGICFESYTREEIARVSCGHPYCKTCWAGYITTKIEDGPGCLRVKCPEPSCSAAVGKDMIEDVTETKVNEKYSRYILRSYVEDGKKIKWCPSPGCGYAVEFGGSESSSYDVSCLCSYRFCWNCSEDAHSPVDCDTVSKWIFKNQDESENKNWMLANSKPCPECKRPIEKNDGCNHMTCSAPCGHEFCWICLKAYRRHSGACNRFVVEQAESKRALLQSEIKRYTHYYVRWAENQSSRLKAMRDLEKLQSVQLKELSDNQCTSETQLQFTVDAWLQIIECRRVLKWTYAYGYYLQDLPKRKFFEYLQGEAESGLERLHHCAENELKQFFIKSEDPSDTFNAFRMKLTGLTTVTKTYFENLVKALENGLVDVTHNEFPPDNETKSTQEKYEEYQDYEDDFLETQRLYDEALLSGCYYD.

The tract at residues 1–26 (MDFSDDDMIDNKSGEENYSYGGGNES) is disordered. The interval 124–332 (VNIQCGICFE…RHSGACNRFV (209 aa)) is TRIAD supradomain. Residues Cys128, Cys131, Cys145, His147, Cys150, Cys153, Cys173, Cys178, Cys217, Cys222, Cys240, Cys242, Cys247, Cys250, His255, Cys260, Cys287, and Cys290 each contribute to the Zn(2+) site. The RING-type 1 zinc-finger motif lies at 128–178 (CGICFESYTREEIARVSCGHPYCKTCWAGYITTKIEDGPGCLRVKCPEPSC). The segment at 197–260 (EKYSRYILRS…SEDAHSPVDC (64 aa)) adopts an IBR-type zinc-finger fold. Residues 287–317 (CPECKRPIEKNDGCNHMTCSAPCGHEFCWIC) form an RING-type 2; atypical zinc finger. Cys300 is a catalytic residue. Zn(2+) is bound by residues Cys305, Cys309, Cys314, Cys317, His324, and Cys328.

This sequence belongs to the RBR family. Ariadne subfamily. Zn(2+) is required as a cofactor.

The enzyme catalyses [E2 ubiquitin-conjugating enzyme]-S-ubiquitinyl-L-cysteine + [acceptor protein]-L-lysine = [E2 ubiquitin-conjugating enzyme]-L-cysteine + [acceptor protein]-N(6)-ubiquitinyl-L-lysine.. Its pathway is protein modification; protein ubiquitination. In terms of biological role, might act as an E3 ubiquitin-protein ligase, or as part of E3 complex, which accepts ubiquitin from specific E2 ubiquitin-conjugating enzymes and then transfers it to substrates. This is Probable E3 ubiquitin-protein ligase ARI9 (ARI9) from Arabidopsis thaliana (Mouse-ear cress).